The chain runs to 402 residues: 1-deoxy-D-xylulose 5-phosphate reductoisomerase (402 aa).

Positions 21, 22, 23, 24, 47, 50, and 127 each coordinate NADPH. K128 provides a ligand contact to 1-deoxy-D-xylulose 5-phosphate. E129 contacts NADPH. D151 contacts Mn(2+). Positions 152, 153, 177, and 200 each coordinate 1-deoxy-D-xylulose 5-phosphate. E153 contacts Mn(2+). Residue G206 participates in NADPH binding. 1-deoxy-D-xylulose 5-phosphate is bound by residues S213, N218, K219, and E222. Position 222 (E222) interacts with Mn(2+).

It belongs to the DXR family. Mg(2+) is required as a cofactor. The cofactor is Mn(2+).

It carries out the reaction 2-C-methyl-D-erythritol 4-phosphate + NADP(+) = 1-deoxy-D-xylulose 5-phosphate + NADPH + H(+). Its pathway is isoprenoid biosynthesis; isopentenyl diphosphate biosynthesis via DXP pathway; isopentenyl diphosphate from 1-deoxy-D-xylulose 5-phosphate: step 1/6. Its function is as follows. Catalyzes the NADPH-dependent rearrangement and reduction of 1-deoxy-D-xylulose-5-phosphate (DXP) to 2-C-methyl-D-erythritol 4-phosphate (MEP). In Mycobacterium marinum (strain ATCC BAA-535 / M), this protein is 1-deoxy-D-xylulose 5-phosphate reductoisomerase.